The primary structure comprises 334 residues: Malate dehydrogenase, cytoplasmic (334 aa).

S2 bears the N-acetylserine mark. NAD(+) is bound by residues 11 to 17 and D42; that span reads GAAGQIA. Positions 92 and 98 each coordinate substrate. Residue N105 participates in NAD(+) binding. K110 is modified (N6-succinyllysine). Residue Q112 participates in NAD(+) binding. N6-acetyllysine occurs at positions 118 and 121. Position 129-131 (129-131) interacts with NAD(+); it reads VGN. The substrate site is built by N131 and R162. The active-site Proton acceptor is H187. Position 214 is an N6-succinyllysine (K214). Phosphoserine is present on S217. The residue at position 230 (R230) is an Omega-N-methylarginine. A Phosphoserine modification is found at S241. K298 carries the post-translational modification N6-acetyllysine; alternate. K298 bears the N6-succinyllysine; alternate mark. S309 carries the phosphoserine modification. K318 is modified (N6-succinyllysine). 2 positions are modified to phosphoserine: S332 and S333.

The protein belongs to the LDH/MDH superfamily. MDH type 2 family. As to quaternary structure, homodimer. In terms of processing, ISGylated. Post-translationally, acetylation at Lys-118 dramatically enhances enzymatic activity and promotes adipogenic differentiation.

Its subcellular location is the cytoplasm. The protein resides in the cytosol. The catalysed reaction is (S)-malate + NAD(+) = oxaloacetate + NADH + H(+). It catalyses the reaction (2R)-2-hydroxy-3-(4-hydroxyphenyl)propanoate + NAD(+) = 3-(4-hydroxyphenyl)pyruvate + NADH + H(+). It carries out the reaction (S)-2-hydroxyglutarate + NAD(+) = 2-oxoglutarate + NADH + H(+). Catalyzes the reduction of aromatic alpha-keto acids in the presence of NADH. Plays essential roles in the malate-aspartate shuttle and the tricarboxylic acid cycle, important in mitochondrial NADH supply for oxidative phosphorylation. Catalyzes the reduction of 2-oxoglutarate to 2-hydroxyglutarate, leading to elevated reactive oxygen species (ROS). This Felis catus (Cat) protein is Malate dehydrogenase, cytoplasmic (MDH1).